A 214-amino-acid polypeptide reads, in one-letter code: tRNA (guanine-N(7)-)-methyltransferase (214 aa).

Residues Glu45, Glu70, Asp97, and Asp119 each contribute to the S-adenosyl-L-methionine site. Asp119 is a catalytic residue. Substrate contacts are provided by residues Lys123, Asp155, and Thr192–Glu195.

The protein belongs to the class I-like SAM-binding methyltransferase superfamily. TrmB family.

It catalyses the reaction guanosine(46) in tRNA + S-adenosyl-L-methionine = N(7)-methylguanosine(46) in tRNA + S-adenosyl-L-homocysteine. It functions in the pathway tRNA modification; N(7)-methylguanine-tRNA biosynthesis. Functionally, catalyzes the formation of N(7)-methylguanine at position 46 (m7G46) in tRNA. The polypeptide is tRNA (guanine-N(7)-)-methyltransferase (Clostridioides difficile (strain 630) (Peptoclostridium difficile)).